The primary structure comprises 384 residues: tRNA-specific 2-thiouridylase MnmA (384 aa).

Residues 18–25 and leucine 44 each bind ATP; that span reads AMSGGVDS. The active-site Nucleophile is the cysteine 112. Cysteines 112 and 209 form a disulfide. Glycine 136 is an ATP binding site. The interaction with tRNA stretch occupies residues 159 to 161; that stretch reads RDQ. The active-site Cysteine persulfide intermediate is the cysteine 209.

The protein belongs to the MnmA/TRMU family.

It localises to the cytoplasm. It carries out the reaction S-sulfanyl-L-cysteinyl-[protein] + uridine(34) in tRNA + AH2 + ATP = 2-thiouridine(34) in tRNA + L-cysteinyl-[protein] + A + AMP + diphosphate + H(+). In terms of biological role, catalyzes the 2-thiolation of uridine at the wobble position (U34) of tRNA, leading to the formation of s(2)U34. The chain is tRNA-specific 2-thiouridylase MnmA from Methylobacterium radiotolerans (strain ATCC 27329 / DSM 1819 / JCM 2831 / NBRC 15690 / NCIMB 10815 / 0-1).